The following is a 170-amino-acid chain: dCTP pyrophosphatase 1 (170 aa).

The interval 1–27 is disordered; the sequence is MSVAGGEIRGDTGGEDTAAPGRFSFSP. At Ser2 the chain carries N-acetylserine. Ser2 bears the Phosphoserine mark. Phosphothreonine is present on Thr12. Substrate contacts are provided by residues His38 and 47–51; that span reads WEQFH. Mg(2+)-binding residues include Glu63 and Glu66. Trp73 is a substrate binding site. Ser85 carries the phosphoserine modification. Mg(2+) is bound by residues Glu95 and Asp98. Tyr102 provides a ligand contact to substrate. Positions 147–170 are disordered; that stretch reads GAISEDQAVGPADIPCDSTGQTST.

In terms of assembly, homotetramer. Requires Mg(2+) as cofactor.

Its subcellular location is the mitochondrion. It is found in the nucleus. The protein localises to the cytoplasm. It localises to the cytosol. It carries out the reaction dCTP + H2O = dCMP + diphosphate + H(+). Its activity is regulated as follows. Inhibited by the reaction end product PPi. Inhibited by dCDP. Inhibited by triptolide. Functionally, hydrolyzes deoxynucleoside triphosphates (dNTPs) to the corresponding nucleoside monophosphates. Has a strong preference for dCTP and its analogs including 5-iodo-dCTP and 5-methyl-dCTP for which it may even have a higher efficiency. May protect DNA or RNA against the incorporation of these genotoxic nucleotide analogs through their catabolism. This is dCTP pyrophosphatase 1 from Homo sapiens (Human).